Consider the following 597-residue polypeptide: Putative Xaa-Pro dipeptidyl-peptidase (597 aa).

Active-site charge relay system residues include Ser224, Asp336, and His367.

It belongs to the peptidase S15 family.

The catalysed reaction is Hydrolyzes Xaa-Pro-|- bonds to release unblocked, N-terminal dipeptides from substrates including Ala-Pro-|-p-nitroanilide and (sequentially) Tyr-Pro-|-Phe-Pro-|-Gly-Pro-|-Ile.. This chain is Putative Xaa-Pro dipeptidyl-peptidase, found in Bacillus anthracis.